The chain runs to 338 residues: Envelope glycoprotein K (338 aa).

Positions 1–30 are cleaved as a signal peptide; it reads MLAVRSLQHLSTVVLITAYGLVLVWYTVFG. The Extracellular portion of the chain corresponds to 31 to 121; it reads ASPLHRCIYA…VNCLETLWYT (91 aa). The interval 31-121 is involved in fusion; it reads ASPLHRCIYA…VNCLETLWYT (91 aa). Residues Asn-48 and Asn-58 are each glycosylated (N-linked (GlcNAc...) asparagine; by host). A helical membrane pass occupies residues 122–140; the sequence is RVRLVVVGWFLYLAFVALH. Residues 141–212 lie on the Cytoplasmic side of the membrane; that stretch reads QRRCMFGVVS…DPVTFLYHRP (72 aa). Residues 213-233 form a helical membrane-spanning segment; that stretch reads AIGVIVGCELIVRFVAVGLIV. Residues 234–243 lie on the Extracellular side of the membrane; that stretch reads GTAFISRGAC. A helical membrane pass occupies residues 244–264; that stretch reads AITYPLFLTITTWCFVSTIGL. Over 265 to 301 the chain is Cytoplasmic; the sequence is TELYCILRRGPAPKNADKAAAPGRSKGLSGVCGRCCS. The segment at 265–301 is interaction with UL20; sequence TELYCILRRGPAPKNADKAAAPGRSKGLSGVCGRCCS. The helical transmembrane segment at 302-322 threads the bilayer; it reads IILSGIAMRLCYIAVVAGVVL. The Extracellular segment spans residues 323–338; that stretch reads VALHYEQEIQRRLFDV.

Belongs to the alphaherpesvirinae glycoprotein K family. Interacts (via UL20 interaction region) with protein UL20 (via N-terminus); this interaction probably plays a role in the coordinate transport of protein UL20 and gK to the trans-Golgi network (TGN), and is required for the cell surface expression of gK. In terms of processing, N-glycosylated.

The protein localises to the host cell membrane. The protein resides in the host endosome membrane. It is found in the host Golgi apparatus membrane. Glycoprotein that probably modulates membrane fusion events during secondary envelopment of cytoplasmic capsids that bud into specific trans-Golgi network (TGN)-derived membranes. Also plays a role, together with gB, in virus-induced cell-to-cell fusion (syncytia formation). Seems to block fusion of virions with infected-cell membranes. The protein is Envelope glycoprotein K (gK) of Homo sapiens (Human).